Here is a 907-residue protein sequence, read N- to C-terminus: Polyphosphoinositide phosphatase (907 aa).

The SAC domain maps to 154–547; it reads FQNVDLSSNF…GDTLSLQYGG (394 aa). Residues 707-788 form a disordered region; that stretch reads GIDPSPFTVR…VKMTDAGDSA (82 aa). Over residues 758–770 the composition is skewed to acidic residues; it reads SEDDSGTDREEEG.

As to quaternary structure, component of the PI(3,5)P2 regulatory complex/PAS complex, at least composed of PIKFYVE, FIG4 and VAC14. VAC14 nucleates the assembly of the complex and serves as a scaffold by pentamerizing into a star-shaped structure, which can bind a single copy each of PIKFYVE and FIG4 and coordinates their activities.

The protein localises to the endosome membrane. The catalysed reaction is a 1,2-diacyl-sn-glycero-3-phospho-(1D-myo-inositol-3,5-bisphosphate) + H2O = a 1,2-diacyl-sn-glycero-3-phospho-(1D-myo-inositol-3-phosphate) + phosphate. It carries out the reaction a 1,2-diacyl-sn-glycero-3-phospho-(1D-myo-inositol-4,5-bisphosphate) + H2O = a 1,2-diacyl-sn-glycero-3-phospho-(1D-myo-inositol 4-phosphate) + phosphate. The enzyme catalyses a 1,2-diacyl-sn-glycero-3-phospho-(1D-myo-inositol-3,4,5-trisphosphate) + H2O = a 1,2-diacyl-sn-glycero-3-phospho-(1D-myo-inositol-3,4-bisphosphate) + phosphate. It catalyses the reaction O-phospho-L-seryl-[protein] + H2O = L-seryl-[protein] + phosphate. Dual specificity phosphatase component of the PI(3,5)P2 regulatory complex which regulates both the synthesis and turnover of phosphatidylinositol 3,5-bisphosphate (PtdIns(3,5)P2). Catalyzes the dephosphorylation of phosphatidylinositol 3,5-bisphosphate (PtdIns(3,5)P2) to form phosphatidylinositol 3-phosphate. Has serine-protein phosphatase activity acting on PIKfyve to stimulate its lipid kinase activity, its catalytically activity being required for maximal PI(3,5)P2 production. In vitro, hydrolyzes all three D5-phosphorylated polyphosphoinositide and although displaying preferences for PtdIns(3,5)P2, it is capable of hydrolyzing PtdIns(3,4,5)P3 and PtdIns(4,5)P2, at least in vitro. The sequence is that of Polyphosphoinositide phosphatase from Homo sapiens (Human).